The sequence spans 615 residues: DNA mismatch repair protein MutL (615 aa).

The tract at residues 363-397 is disordered; sequence FAEPAAREPVAPRYSPAPASGSRPAAPWPNAQPGY. Residues 364–387 are compositionally biased toward low complexity; the sequence is AEPAAREPVAPRYSPAPASGSRPA.

Belongs to the DNA mismatch repair MutL/HexB family.

This protein is involved in the repair of mismatches in DNA. It is required for dam-dependent methyl-directed DNA mismatch repair. May act as a 'molecular matchmaker', a protein that promotes the formation of a stable complex between two or more DNA-binding proteins in an ATP-dependent manner without itself being part of a final effector complex. The chain is DNA mismatch repair protein MutL from Shigella flexneri.